We begin with the raw amino-acid sequence, 489 residues long: Probable transporter MCH1 (489 aa).

The next 12 helical transmembrane spans lie at 34 to 54 (ISLI…FTPV), 68 to 88 (IIGS…GYLA), 94 to 114 (VLLS…AATV), 124 to 144 (LAIS…TALL), 156 to 175 (LTIS…GSRV), 196 to 216 (FSFL…VVSI), 262 to 282 (ISTY…EMYI), 302 to 324 (VAIH…DFLV), 335 to 355 (LLSI…STFV), 359 to 379 (YYII…LYPT), 403 to 423 (IGST…CGVF), and 463 to 483 (SLII…ILRI).

The protein belongs to the major facilitator superfamily.

Its subcellular location is the vacuole membrane. Its function is as follows. Probable transporter. The chain is Probable transporter MCH1 (MCH1) from Wickerhamomyces anomalus (Yeast).